A 345-amino-acid chain; its full sequence is Phosphoribosylformylglycinamidine cyclo-ligase (345 aa).

It belongs to the AIR synthase family.

It localises to the cytoplasm. The enzyme catalyses 2-formamido-N(1)-(5-O-phospho-beta-D-ribosyl)acetamidine + ATP = 5-amino-1-(5-phospho-beta-D-ribosyl)imidazole + ADP + phosphate + H(+). Its pathway is purine metabolism; IMP biosynthesis via de novo pathway; 5-amino-1-(5-phospho-D-ribosyl)imidazole from N(2)-formyl-N(1)-(5-phospho-D-ribosyl)glycinamide: step 2/2. In Shewanella amazonensis (strain ATCC BAA-1098 / SB2B), this protein is Phosphoribosylformylglycinamidine cyclo-ligase.